The following is a 178-amino-acid chain: Protein SPEAR1 (178 aa).

2 disordered regions span residues 1-48 (MGST…QRGL) and 139-178 (HFLN…RLSL). Low complexity predominate over residues 14 to 28 (SSPPSSSPTSSSSSP). The short motif at 46-54 (RGLGVAQLE) is the SPL element. The span at 144 to 167 (DPSSTTRRSKSLGSGIQHSGSSEN) shows a compositional bias: polar residues. The EAR signature appears at 170–176 (VDLELRL).

In terms of assembly, interacts with SPL and SPEAR2. Not detected in leaves.

Adapter-like transcriptional repressor recruiting TPL/TPR corepressors to inhibit TCP transcription factors. The sequence is that of Protein SPEAR1 from Arabidopsis thaliana (Mouse-ear cress).